The primary structure comprises 822 residues: Fibroblast growth factor receptor 1 (822 aa).

Residues 1-21 (MWGWRGLLFWAVLVTATLCTA) form the signal peptide. The Extracellular portion of the chain corresponds to 22–376 (RPAPTLPEQA…AVMTSPLYLE (355 aa)). The Ig-like C2-type 1 domain occupies 25–119 (PTLPEQAQPW…DTTYFSVNVS (95 aa)). Cysteine 55 and cysteine 101 are joined by a disulfide. N-linked (GlcNAc...) asparagine glycans are attached at residues asparagine 77 and asparagine 117. Residues 120–162 (DALPSSEDDDDDDDSSSEEKETDNTKPNRRPVAPYWTSPEKME) are disordered. A compositionally biased stretch (acidic residues) spans 125 to 135 (SEDDDDDDDSS). Residues 136–145 (SEEKETDNTK) show a composition bias toward basic and acidic residues. Ig-like C2-type domains follow at residues 158–246 (PEKM…YQLD) and 255–357 (PILQ…AWLT). Residues 160-177 (KMEKKLHAVPAAKTVKFK) form a heparin-binding region. An intrachain disulfide couples cysteine 178 to cysteine 230. 6 N-linked (GlcNAc...) asparagine glycosylation sites follow: asparagine 227, asparagine 240, asparagine 264, asparagine 296, asparagine 317, and asparagine 330. Cysteine 277 and cysteine 341 are oxidised to a cystine. A helical transmembrane segment spans residues 377–397 (IIIYCTGAFLISCMVGSVIIY). Over 398–822 (KMKSGTKKSD…QLANGGLNRR (425 aa)) the chain is Cytoplasmic. Tyrosine 463 carries the phosphotyrosine; by autocatalysis modification. The Protein kinase domain maps to 478-767 (LVLGKPLGEG…VALTSNQEYL (290 aa)). ATP is bound by residues 484–490 (LGEGCFG), lysine 514, 562–564 (EYA), and asparagine 568. Phosphotyrosine; by autocatalysis is present on residues tyrosine 583 and tyrosine 585. Aspartate 623 serves as the catalytic Proton acceptor. ATP contacts are provided by arginine 627 and aspartate 641. Phosphotyrosine; by autocatalysis occurs at positions 653, 654, 730, and 766. The disordered stretch occupies residues 770 to 822 (SMPLDQDSPSFPDTRSSTCSSGEDSVFSHEPFPEEPCLPRHPTQLANGGLNRR). Over residues 776–792 (DSPSFPDTRSSTCSSGE) the composition is skewed to polar residues.

The protein belongs to the protein kinase superfamily. Tyr protein kinase family. Fibroblast growth factor receptor subfamily. As to quaternary structure, monomer. Homodimer after ligand binding. Interacts predominantly with FGF1 and FGF2, but can also interact with FGF3, FGF4, FGF5, FGF6, FGF8, FGF10, FGF19, FGF21, FGF22 and FGF23 (in vitro). Ligand specificity is determined by tissue-specific expression of isoforms, and differences in the third Ig-like domain are crucial for ligand specificity. Affinity for fibroblast growth factors (FGFs) is increased by heparan sulfate glycosaminoglycans that function as coreceptors. Likewise, KLB increases the affinity for FGF19, FGF21 and FGF23. Interacts (phosphorylated on Tyr-766) with PLCG1 (via SH2 domains). Interacts with FRS2. Interacts (via C-terminus) with NEDD4 (via WW3 domain). Interacts with RPS6KA1. Interacts with KL. Interacts with SHB (via SH2 domain) and GRB10. Interacts with ANOS1; this interaction does not interfere with FGF2-binding to FGFR1, but prevents binding of heparin-bound FGF2. Interacts with SOX2 and SOX3. Interacts with FLRT1, FLRT2 and FLRT3. Found in a ternary complex with FGF1 and ITGAV:ITGB3. Autophosphorylated. Binding of FGF family members together with heparan sulfate proteoglycan or heparin promotes receptor dimerization and autophosphorylation on tyrosine residues. Autophosphorylation occurs in trans between the two FGFR molecules present in the dimer and proceeds in a highly ordered manner. Initial autophosphorylation at Tyr-653 increases the kinase activity by a factor of 50 to 100. After this, Tyr-583 becomes phosphorylated, followed by phosphorylation of Tyr-463, Tyr-766, Tyr-583 and Tyr-585. In a third stage, Tyr-654 is autophosphorylated, resulting in a further tenfold increase of kinase activity. Phosphotyrosine residues provide docking sites for interacting proteins and so are crucial for FGFR1 function and its regulation. In terms of processing, ubiquitinated. FGFR1 is rapidly ubiquitinated by NEDD4 after autophosphorylation, leading to internalization and lysosomal degradation. CBL is recruited to activated FGFR1 via FRS2 and GRB2, and mediates ubiquitination and subsequent degradation of FGFR1. Post-translationally, N-glycosylated in the endoplasmic reticulum. The N-glycan chains undergo further maturation to an Endo H-resistant form in the Golgi apparatus. Expressed in the parathyroid.

It localises to the cell membrane. The protein localises to the nucleus. The protein resides in the cytoplasm. Its subcellular location is the cytosol. It is found in the cytoplasmic vesicle. It carries out the reaction L-tyrosyl-[protein] + ATP = O-phospho-L-tyrosyl-[protein] + ADP + H(+). With respect to regulation, present in an inactive conformation in the absence of bound ligand. Ligand binding leads to dimerization and activation by sequential autophosphorylation on tyrosine residues. Its function is as follows. Tyrosine-protein kinase that acts as a cell-surface receptor for fibroblast growth factors and plays an essential role in the regulation of embryonic development, cell proliferation, differentiation and migration. Required for normal mesoderm patterning and correct axial organization during embryonic development, normal skeletogenesis and normal development of the gonadotropin-releasing hormone (GnRH) neuronal system. Phosphorylates PLCG1, FRS2, GAB1 and SHB. Ligand binding leads to the activation of several signaling cascades. Activation of PLCG1 leads to the production of the cellular signaling molecules diacylglycerol and inositol 1,4,5-trisphosphate. Phosphorylation of FRS2 triggers recruitment of GRB2, GAB1, PIK3R1 and SOS1, and mediates activation of RAS, MAPK1/ERK2, MAPK3/ERK1 and the MAP kinase signaling pathway, as well as of the AKT1 signaling pathway. Promotes phosphorylation of SHC1, STAT1 and PTPN11/SHP2. In the nucleus, enhances RPS6KA1 and CREB1 activity and contributes to the regulation of transcription. FGFR1 signaling is down-regulated by IL17RD/SEF, and by FGFR1 ubiquitination, internalization and degradation. The chain is Fibroblast growth factor receptor 1 (Fgfr1) from Rattus norvegicus (Rat).